Reading from the N-terminus, the 399-residue chain is Enolase (399 aa).

Q152 is a (2R)-2-phosphoglycerate binding site. E194 serves as the catalytic Proton donor. The Mg(2+) site is built by D230, E273, and D301. (2R)-2-phosphoglycerate contacts are provided by K326, R355, S356, and K377. K326 serves as the catalytic Proton acceptor.

Belongs to the enolase family. The cofactor is Mg(2+).

The protein localises to the cytoplasm. Its subcellular location is the secreted. It localises to the cell surface. The catalysed reaction is (2R)-2-phosphoglycerate = phosphoenolpyruvate + H2O. It participates in carbohydrate degradation; glycolysis; pyruvate from D-glyceraldehyde 3-phosphate: step 4/5. Its function is as follows. Catalyzes the reversible conversion of 2-phosphoglycerate (2-PG) into phosphoenolpyruvate (PEP). It is essential for the degradation of carbohydrates via glycolysis. The chain is Enolase from Methanocorpusculum labreanum (strain ATCC 43576 / DSM 4855 / Z).